The primary structure comprises 438 residues: Glycerol-3-phosphate acyltransferase 3 (438 aa).

A helical transmembrane segment spans residues Trp14–Ile34. 2 positions are modified to phosphoserine: Ser68 and Ser77. Helical transmembrane passes span Ile137–Leu157 and Val161–Leu181. The HXXXXD motif motif lies at His229–Asp234.

It belongs to the 1-acyl-sn-glycerol-3-phosphate acyltransferase family. Most abundant in epididymal fat, followed by small intestine, brown adipose tissue, kidney, heart and colon.

The protein resides in the endoplasmic reticulum membrane. It carries out the reaction sn-glycerol 3-phosphate + an acyl-CoA = a 1-acyl-sn-glycero-3-phosphate + CoA. It catalyses the reaction a 1-acyl-sn-glycero-3-phosphate + an acyl-CoA = a 1,2-diacyl-sn-glycero-3-phosphate + CoA. The catalysed reaction is dodecanoyl-CoA + sn-glycerol 3-phosphate = 1-dodecanoyl-sn-glycerol 3-phosphate + CoA. The enzyme catalyses sn-glycerol 3-phosphate + hexadecanoyl-CoA = 1-hexadecanoyl-sn-glycero-3-phosphate + CoA. It carries out the reaction sn-glycerol 3-phosphate + (9Z)-octadecenoyl-CoA = 1-(9Z-octadecenoyl)-sn-glycero-3-phosphate + CoA. It catalyses the reaction (9Z,12Z)-octadecadienoyl-CoA + sn-glycerol 3-phosphate = 1-(9Z,12Z)-octadecadienoyl-sn-glycero-3-phosphate + CoA. The catalysed reaction is 1-tetradecanoyl-sn-glycerol 3-phosphate + (9Z)-octadecenoyl-CoA = 1-tetradecanoyl-2-(9Z)-octadecenoyl-sn-glycero-3-phosphate + CoA. The enzyme catalyses 1-hexadecanoyl-sn-glycero-3-phosphate + (9Z)-octadecenoyl-CoA = 1-hexadecanoyl-2-(9Z-octadecenoyl)-sn-glycero-3-phosphate + CoA. It carries out the reaction 1-(9Z-octadecenoyl)-sn-glycero-3-phosphate + (9Z)-octadecenoyl-CoA = 1,2-di-(9Z-octadecenoyl)-sn-glycero-3-phosphate + CoA. It catalyses the reaction 1-(6Z,9Z,12Z-octadecatrienoyl)-sn-glycero-3-phosphate + (9Z)-octadecenoyl-CoA = (6Z,9Z,12Z)-octadecatrienoyl-2-(9Z)-octadecenoyl-sn-glycero-3-phosphate + CoA. The catalysed reaction is 1-(9Z,12Z,15Z)-octadecatrienoyl-sn-glycero-3-phosphate + (9Z)-octadecenoyl-CoA = 1-(9Z,12Z,15Z)-octadecatrienoyl-2-(9Z)-octadecenoyl-sn-glycero-3-phosphate + CoA. The enzyme catalyses 1-(9Z-octadecenoyl)-sn-glycero-3-phosphate + tetradecanoyl-CoA = 1-(9Z)-octadecenoyl-2-tetradecanoyl-sn-glycero-3-phosphate + CoA. It carries out the reaction 1-(9Z-octadecenoyl)-sn-glycero-3-phosphate + hexadecanoyl-CoA = 1-(9Z)-octadecenoyl-2-hexadecanoyl-sn-glycero-3-phosphate + CoA. It catalyses the reaction 1-(9Z-octadecenoyl)-sn-glycero-3-phosphate + octadecanoyl-CoA = 1-(9Z-octadecenoyl)-2-octadecanoyl-sn-glycero-3-phosphate + CoA. The catalysed reaction is 1-(9Z-octadecenoyl)-sn-glycero-3-phosphate + (9Z,12Z)-octadecadienoyl-CoA = 1-(9Z)-octadecenoyl-2-(9Z,12Z)-octadecadienoyl-sn-glycero-3-phosphate + CoA. The enzyme catalyses 1-(5Z,8Z,11Z,14Z-eicosatetraenoyl)-sn-glycero-3-phosphate + (9Z)-octadecenoyl-CoA = 1-(5Z,8Z,11Z,14Z)-eicosatetraenoyl-2-(9Z)-octadecenoyl-sn-glycero-3-phosphate + CoA. The protein operates within glycerolipid metabolism; triacylglycerol biosynthesis. Its pathway is phospholipid metabolism; CDP-diacylglycerol biosynthesis; CDP-diacylglycerol from sn-glycerol 3-phosphate: step 1/3. In terms of biological role, converts glycerol-3-phosphate to 1-acyl-sn-glycerol-3-phosphate (lysophosphatidic acid or LPA) by incorporating an acyl moiety at the sn-1 position of the glycerol backbone. Also converts LPA into 1,2-diacyl-sn-glycerol-3-phosphate (phosphatidic acid or PA) by incorporating an acyl moiety at the sn-2 position of the glycerol backbone. Protects cells against lipotoxicity. In Mus musculus (Mouse), this protein is Glycerol-3-phosphate acyltransferase 3.